The primary structure comprises 82 residues: Mu-conotoxin GVIIJ (82 aa).

Positions 1–22 are cleaved as a signal peptide; the sequence is MKLTCVVIVAALLLTACQLITA. The propeptide occupies 23 to 47; it reads LDCGGTQKHRALRSTIKLSLLRQHR. W49 is modified (6'-bromotryptophan). 3 cysteine pairs are disulfide-bonded: C50–C65, C57–C69, and C64–C76. P53 carries the post-translational modification 4-hydroxyproline. C71 is a binding site for a protein.

The protein belongs to the conotoxin O1 superfamily. Post-translationally, cys-71 is a key residue that tethers to the channel by covalent attachment, leading to nearly irreversible inhibition (k(off) very low). In order to determine the solution structure without dimerization, this residue was mutated to Cys. Expressed by the venom duct.

It localises to the secreted. Its function is as follows. Mu-conotoxins block voltage-gated sodium channels (Nav). This toxin (GVIIJ(SSG)) blocks Nav1.1/SCN1A (Kd=11 nM), Nav1.2/SCN2A (Kd=11 nM), Nav1.3/SCN3A (Kd=15 nM), Nav1.4/SCN4A (Kd=4.7 nM), Nav1.6/SCN8A (Kd=360 nM) and Nav1.7/SCN9A (Kd=41 nM). It binds the channel at the newly described site 8, which is composed by two surfaces whose one contains a non-disulfide-bonded cysteine (which is free to covalently bind the toxin Cys-71). It is noteworthy that coexpression of subunits beta-2 or beta-4 (but not beta-1 or beta-3) protects rNav1.1-1.7 against block by the toxin, since these subunits (thanks to their extracellular domain) covalently bind to the key cysteine of the channel, thus preventing the covalent binding of the toxin. The polypeptide is Mu-conotoxin GVIIJ (Conus geographus (Geography cone)).